Reading from the N-terminus, the 515-residue chain is Bifunctional purine biosynthesis protein PurH (515 aa).

An MGS-like domain is found at 1 to 145; it reads MTKRVLISVS…KNHASVTVVV (145 aa).

This sequence belongs to the PurH family.

It carries out the reaction (6R)-10-formyltetrahydrofolate + 5-amino-1-(5-phospho-beta-D-ribosyl)imidazole-4-carboxamide = 5-formamido-1-(5-phospho-D-ribosyl)imidazole-4-carboxamide + (6S)-5,6,7,8-tetrahydrofolate. The catalysed reaction is IMP + H2O = 5-formamido-1-(5-phospho-D-ribosyl)imidazole-4-carboxamide. The protein operates within purine metabolism; IMP biosynthesis via de novo pathway; 5-formamido-1-(5-phospho-D-ribosyl)imidazole-4-carboxamide from 5-amino-1-(5-phospho-D-ribosyl)imidazole-4-carboxamide (10-formyl THF route): step 1/1. It functions in the pathway purine metabolism; IMP biosynthesis via de novo pathway; IMP from 5-formamido-1-(5-phospho-D-ribosyl)imidazole-4-carboxamide: step 1/1. This Streptococcus pneumoniae (strain Taiwan19F-14) protein is Bifunctional purine biosynthesis protein PurH.